Here is a 314-residue protein sequence, read N- to C-terminus: 4-hydroxy-3-methylbut-2-enyl diphosphate reductase (314 aa).

Cys-12 serves as a coordination point for [4Fe-4S] cluster. (2E)-4-hydroxy-3-methylbut-2-enyl diphosphate is bound by residues His-41 and His-74. Residues His-41 and His-74 each contribute to the dimethylallyl diphosphate site. The isopentenyl diphosphate site is built by His-41 and His-74. Residue Cys-96 coordinates [4Fe-4S] cluster. Residue His-124 coordinates (2E)-4-hydroxy-3-methylbut-2-enyl diphosphate. Position 124 (His-124) interacts with dimethylallyl diphosphate. Residue His-124 coordinates isopentenyl diphosphate. Glu-126 functions as the Proton donor in the catalytic mechanism. Thr-167 contributes to the (2E)-4-hydroxy-3-methylbut-2-enyl diphosphate binding site. Cys-197 contributes to the [4Fe-4S] cluster binding site. 4 residues coordinate (2E)-4-hydroxy-3-methylbut-2-enyl diphosphate: Ser-225, Ser-226, Asn-227, and Ser-269. Residues Ser-225, Ser-226, Asn-227, and Ser-269 each contribute to the dimethylallyl diphosphate site. Isopentenyl diphosphate is bound by residues Ser-225, Ser-226, Asn-227, and Ser-269.

The protein belongs to the IspH family. It depends on [4Fe-4S] cluster as a cofactor.

The enzyme catalyses isopentenyl diphosphate + 2 oxidized [2Fe-2S]-[ferredoxin] + H2O = (2E)-4-hydroxy-3-methylbut-2-enyl diphosphate + 2 reduced [2Fe-2S]-[ferredoxin] + 2 H(+). It carries out the reaction dimethylallyl diphosphate + 2 oxidized [2Fe-2S]-[ferredoxin] + H2O = (2E)-4-hydroxy-3-methylbut-2-enyl diphosphate + 2 reduced [2Fe-2S]-[ferredoxin] + 2 H(+). Its pathway is isoprenoid biosynthesis; dimethylallyl diphosphate biosynthesis; dimethylallyl diphosphate from (2E)-4-hydroxy-3-methylbutenyl diphosphate: step 1/1. It participates in isoprenoid biosynthesis; isopentenyl diphosphate biosynthesis via DXP pathway; isopentenyl diphosphate from 1-deoxy-D-xylulose 5-phosphate: step 6/6. Its function is as follows. Catalyzes the conversion of 1-hydroxy-2-methyl-2-(E)-butenyl 4-diphosphate (HMBPP) into a mixture of isopentenyl diphosphate (IPP) and dimethylallyl diphosphate (DMAPP). Acts in the terminal step of the DOXP/MEP pathway for isoprenoid precursor biosynthesis. In Aliivibrio salmonicida (strain LFI1238) (Vibrio salmonicida (strain LFI1238)), this protein is 4-hydroxy-3-methylbut-2-enyl diphosphate reductase.